The following is a 987-amino-acid chain: UPF0182 protein Lxx09300 (987 aa).

A run of 7 helical transmembrane segments spans residues 17–37, 59–79, 108–128, 167–187, 206–226, 256–276, and 283–303; these read VWTTLGVIVALVILFFIFAGL, AAIAMFFVGFLGMALPLWVVI, RLAMYGIPIVFGIFAGVSAAS, VGFASAVVLISLLATLATCYL, VQISVIAAVYLLLQGVSVWLD, AVLAVAAVFVALLFAVTAFTG, and VGTALLIVAALVIGAIYPWAI. Disordered stretches follow at residues 700-719 and 886-947; these read RDDAWTTPNDPTSSPTDPTL and TAGD…ALQQ. A compositionally biased stretch (low complexity) spans 705–719; the sequence is TTPNDPTSSPTDPTL. Residues 897–932 show a composition bias toward gly residues; that stretch reads GGSGGGSSGDAGSSAGGGSSGGGGSSAGGSSSGSGS. Residues 933–947 are compositionally biased toward low complexity; the sequence is SGTQSNAALQRALQQ.

The protein belongs to the UPF0182 family.

Its subcellular location is the cell membrane. The protein is UPF0182 protein Lxx09300 of Leifsonia xyli subsp. xyli (strain CTCB07).